Reading from the N-terminus, the 72-residue chain is Bowman-Birk type proteinase inhibitor 2a (72 aa).

Disulfide bonds link C8/C61, C9/C24, C12/C57, C14/C22, C31/C38, C35/C50, and C40/C48.

Dimer.

Its function is as follows. Inhibits trypsin (IC(50)=0.9 nM) and alpha-chymotrypsin (IC(50)=1.1 nM). In Lathyrus sativus (White vetchling), this protein is Bowman-Birk type proteinase inhibitor 2a.